Reading from the N-terminus, the 165-residue chain is Protein NKG7 (165 aa).

Transmembrane regions (helical) follow at residues 9 to 29 (LLGG…DFWF), 61 to 81 (FSIM…LSCF), 92 to 112 (LVST…MAVY), and 133 to 153 (FYLG…SLGA).

Belongs to the PMP-22/EMP/MP20 family. In terms of tissue distribution, expressed in activated T-cells, in kidney, liver, lung and pancreas. Not expressed in brain, heart, or skeletal muscle. Expressed at high levels in TCR gamma delta-expressing CTL clones, and in some TCR alpha beta-expressing CTL clones (both CD4+ and CD8+), but is not expressed in other TCR alpha beta-expressing CTL clones and in cell lines representing B-cells, monocytes, and myeloid cells.

It is found in the cell membrane. The protein resides in the cytolytic granule membrane. Its function is as follows. Regulates cytotoxic granule exocytosis in effector lymphocytes, thus acting as a critical mediator of inflammation in a broad range of infectious and non-infectious diseases. Essential for cytotoxic degranulation of natural killer (NK) cells and CD8(+) T-cells and for the activation of CD4(+) T-cells following infection. Plays a critical role in CD8(+) T-cell and NK cell-mediated cytolysis of target cells and contributes to the cytolytic activity via the perforin/granzyme pathway by enhancing exocytosis of LAMP1-carrying lytic granules. Contributes to NK cell-mediated control of cancer metastasis. This is Protein NKG7 (NKG7) from Homo sapiens (Human).